A 24-amino-acid chain; its full sequence is Malate dehydrogenase (24 aa).

An NAD(+)-binding site is contributed by 11-17 (GAAGQIG).

The protein belongs to the LDH/MDH superfamily. MDH type 2 family.

The catalysed reaction is (S)-malate + NAD(+) = oxaloacetate + NADH + H(+). Its function is as follows. Catalyzes the reversible oxidation of malate to oxaloacetate. The sequence is that of Malate dehydrogenase (mdh) from Planomonospora venezuelensis.